Reading from the N-terminus, the 221-residue chain is MKIFLDTADVEEIRQGVAMGVVDGVTTNPSLAAKAGRNFRDVVLEIVEICPGPVSAETVALQADEIVREGRILAKWAPNIVVKVPLMAEGLKAVKQLTSEGIKTNVTLIFSASQALLAAKAGATFVSPFLGRLDDIGQDGMILIRDIVQIFKNYNIQTEVLAASIRHPVHVLQSALAGSHVATMPFKVLQQLVKHPLTDKGIETFLVDWQQVPDAATVFAE.

Lysine 83 functions as the Schiff-base intermediate with substrate in the catalytic mechanism.

The protein belongs to the transaldolase family. Type 3B subfamily.

It is found in the cytoplasm. It catalyses the reaction D-sedoheptulose 7-phosphate + D-glyceraldehyde 3-phosphate = D-erythrose 4-phosphate + beta-D-fructose 6-phosphate. Its pathway is carbohydrate degradation; pentose phosphate pathway; D-glyceraldehyde 3-phosphate and beta-D-fructose 6-phosphate from D-ribose 5-phosphate and D-xylulose 5-phosphate (non-oxidative stage): step 2/3. Functionally, transaldolase is important for the balance of metabolites in the pentose-phosphate pathway. In Herpetosiphon aurantiacus (strain ATCC 23779 / DSM 785 / 114-95), this protein is Probable transaldolase.